We begin with the raw amino-acid sequence, 545 residues long: T-complex protein 1 subunit gamma (545 aa).

N-acetylmethionine is present on Met-1. The disordered stretch occupies residues 1–24 (MMGHRPVLVLSQNTKRESGRKVQS). At Ser-11 the chain carries Phosphoserine. Lys-15 participates in a covalent cross-link: Glycyl lysine isopeptide (Lys-Gly) (interchain with G-Cter in SUMO2). Gly-42 provides a ligand contact to ADP. Gly-42 lines the ATP pocket. A Mg(2+)-binding site is contributed by Asp-93. Residues Gly-94, Thr-95, Thr-96, Ser-97, Thr-162, and Lys-163 each contribute to the ADP site. Residues Gly-94, Thr-95, and Thr-96 each contribute to the ATP site. Ser-170 bears the Phosphoserine mark. Lys-222 is subject to N6-acetyllysine. Phosphoserine occurs at positions 243 and 244. The residue at position 247 (Tyr-247) is a Phosphotyrosine. Glycyl lysine isopeptide (Lys-Gly) (interchain with G-Cter in SUMO2) cross-links involve residues Lys-248 and Lys-249. Ser-252 is modified (phosphoserine). Cys-366 and Cys-372 are disulfide-bonded. Lys-381 participates in a covalent cross-link: Glycyl lysine isopeptide (Lys-Gly) (interchain with G-Cter in SUMO2). Gly-411 is an ADP binding site. Gly-411 provides a ligand contact to ATP. Residues Thr-430 and Thr-459 each carry the phosphothreonine modification. Residues Gly-482, Glu-483, Glu-497, and Lys-502 each contribute to the ADP site. Gly-482 is a binding site for ATP. Glu-497 serves as a coordination point for ATP. Residues 526-545 (HKKKGDDQNRQTGAPDAGQE) are disordered.

It belongs to the TCP-1 chaperonin family. Component of the chaperonin-containing T-complex (TRiC), a hexadecamer composed of two identical back-to-back stacked rings enclosing a protein folding chamber. Each ring is made up of eight different subunits: TCP1/CCT1, CCT2, CCT3, CCT4, CCT5, CCT6A/CCT6, CCT7, CCT8. Interacts with PACRG. Interacts with DNAAF4. Interacts with DLEC1.

The protein localises to the cytoplasm. It catalyses the reaction ATP + H2O = ADP + phosphate + H(+). Functionally, component of the chaperonin-containing T-complex (TRiC), a molecular chaperone complex that assists the folding of actin, tubulin and other proteins upon ATP hydrolysis. The TRiC complex mediates the folding of WRAP53/TCAB1, thereby regulating telomere maintenance. As part of the TRiC complex may play a role in the assembly of BBSome, a complex involved in ciliogenesis regulating transports vesicles to the cilia. In Rattus norvegicus (Rat), this protein is T-complex protein 1 subunit gamma (Cct3).